We begin with the raw amino-acid sequence, 900 residues long: E3 ubiquitin-protein ligase BRE1-like 2 (900 aa).

Positions 1–31 are disordered; that stretch reads MENQESDEPMQKKPHLLDSVSPNSMARNSSP. The segment covering 20 to 31 has biased composition (polar residues); the sequence is VSPNSMARNSSP. 4 coiled-coil regions span residues 63 to 96, 217 to 300, 437 to 660, and 706 to 737; these read TVLQ…LQLN, EDAT…KDAA, SRIE…AEME, and SEKQ…EQMK. The segment at 848–887 adopts an RING-type zinc-finger fold; it reads CGVCFDRPKEVVIVKCYHLFCQQCIQRSLEIRHRKCPGCG.

This sequence belongs to the BRE1 family. In terms of assembly, may act as a tetramer consisting of two copies of HUB1 and two copies of HUB2. As to expression, ubiquitously expressed.

It localises to the nucleus. The enzyme catalyses S-ubiquitinyl-[E2 ubiquitin-conjugating enzyme]-L-cysteine + [acceptor protein]-L-lysine = [E2 ubiquitin-conjugating enzyme]-L-cysteine + N(6)-ubiquitinyl-[acceptor protein]-L-lysine.. The protein operates within protein modification; protein ubiquitination. Functionally, E3 ubiquitin-protein ligase that monoubiquitinates H2B to form H2BK143ub1. H2BK143ub1 gives a specific tag for epigenetic transcriptional activation and is also prerequisite for H3K4me and maybe H3K79me. It thereby plays a central role in histone code and gene regulation. Forms a ubiquitin ligase complex in cooperation with the E2 enzyme UBC2/RAD6. The protein is E3 ubiquitin-protein ligase BRE1-like 2 (HUB2) of Arabidopsis thaliana (Mouse-ear cress).